A 352-amino-acid chain; its full sequence is N-acetyl-gamma-glutamyl-phosphate reductase (352 aa).

The active site involves Cys155.

This sequence belongs to the NAGSA dehydrogenase family. Type 1 subfamily.

It is found in the cytoplasm. It catalyses the reaction N-acetyl-L-glutamate 5-semialdehyde + phosphate + NADP(+) = N-acetyl-L-glutamyl 5-phosphate + NADPH + H(+). It functions in the pathway amino-acid biosynthesis; L-arginine biosynthesis; N(2)-acetyl-L-ornithine from L-glutamate: step 3/4. In terms of biological role, catalyzes the NADPH-dependent reduction of N-acetyl-5-glutamyl phosphate to yield N-acetyl-L-glutamate 5-semialdehyde. The polypeptide is N-acetyl-gamma-glutamyl-phosphate reductase (Rippkaea orientalis (strain PCC 8801 / RF-1) (Cyanothece sp. (strain PCC 8801))).